A 329-amino-acid polypeptide reads, in one-letter code: GTP 3',8-cyclase (329 aa).

The Radical SAM core domain occupies 8-234; sequence AFARKFYYLR…QLRSRADGPA (227 aa). Arg-17 serves as a coordination point for GTP. [4Fe-4S] cluster-binding residues include Cys-24 and Cys-28. Residue Tyr-30 participates in S-adenosyl-L-methionine binding. Residue Cys-31 coordinates [4Fe-4S] cluster. Position 68 (Arg-68) interacts with GTP. Gly-72 is a binding site for S-adenosyl-L-methionine. Thr-99 is a GTP binding site. S-adenosyl-L-methionine is bound at residue Ser-123. Residue Lys-160 coordinates GTP. Met-194 lines the S-adenosyl-L-methionine pocket. Positions 257 and 260 each coordinate [4Fe-4S] cluster. 262-264 provides a ligand contact to GTP; it reads RLR. Cys-274 is a [4Fe-4S] cluster binding site.

The protein belongs to the radical SAM superfamily. MoaA family. In terms of assembly, monomer and homodimer. [4Fe-4S] cluster is required as a cofactor.

It catalyses the reaction GTP + AH2 + S-adenosyl-L-methionine = (8S)-3',8-cyclo-7,8-dihydroguanosine 5'-triphosphate + 5'-deoxyadenosine + L-methionine + A + H(+). It participates in cofactor biosynthesis; molybdopterin biosynthesis. Its function is as follows. Catalyzes the cyclization of GTP to (8S)-3',8-cyclo-7,8-dihydroguanosine 5'-triphosphate. This chain is GTP 3',8-cyclase, found in Cronobacter sakazakii (strain ATCC BAA-894) (Enterobacter sakazakii).